The chain runs to 504 residues: Taurochenodeoxycholic 6 alpha-hydroxylase (504 aa).

Transmembrane regions (helical) follow at residues 6 to 26 (LASV…LLLL) and 110 to 130 (APVL…LLNG). Cys-451 provides a ligand contact to heme.

Belongs to the cytochrome P450 family. The cofactor is heme. As to expression, primarily expressed in liver. Low expression in kidney.

It is found in the endoplasmic reticulum membrane. It catalyses the reaction taurochenodeoxycholate + reduced [NADPH--hemoprotein reductase] + O2 = taurohyocholate + oxidized [NADPH--hemoprotein reductase] + H2O + H(+). The catalysed reaction is lithocholate + reduced [NADPH--hemoprotein reductase] + O2 = hyodeoxycholate + oxidized [NADPH--hemoprotein reductase] + H2O + H(+). In terms of biological role, catalyzes the 6 alpha hydroxylation oxidation of taurodeoxycholate to produce the pig specific bile acid taurohyocholic acid. The chain is Taurochenodeoxycholic 6 alpha-hydroxylase (CYP4A21) from Sus scrofa (Pig).